Here is a 140-residue protein sequence, read N- to C-terminus: Large ribosomal subunit protein bL17 (140 aa).

The tract at residues 119–140 (DTTAKGQDSGPVQVEEQENEEA) is disordered.

Belongs to the bacterial ribosomal protein bL17 family. As to quaternary structure, part of the 50S ribosomal subunit. Contacts protein L32.

The polypeptide is Large ribosomal subunit protein bL17 (Zymomonas mobilis subsp. mobilis (strain ATCC 31821 / ZM4 / CP4)).